The chain runs to 272 residues: Putative pyruvate, phosphate dikinase regulatory protein (272 aa).

154–161 (GVSRTSKS) provides a ligand contact to ADP.

This sequence belongs to the pyruvate, phosphate/water dikinase regulatory protein family. PDRP subfamily.

The catalysed reaction is N(tele)-phospho-L-histidyl/L-threonyl-[pyruvate, phosphate dikinase] + ADP = N(tele)-phospho-L-histidyl/O-phospho-L-threonyl-[pyruvate, phosphate dikinase] + AMP + H(+). The enzyme catalyses N(tele)-phospho-L-histidyl/O-phospho-L-threonyl-[pyruvate, phosphate dikinase] + phosphate + H(+) = N(tele)-phospho-L-histidyl/L-threonyl-[pyruvate, phosphate dikinase] + diphosphate. Bifunctional serine/threonine kinase and phosphorylase involved in the regulation of the pyruvate, phosphate dikinase (PPDK) by catalyzing its phosphorylation/dephosphorylation. The protein is Putative pyruvate, phosphate dikinase regulatory protein of Wolbachia pipientis subsp. Culex pipiens (strain wPip).